The sequence spans 172 residues: Iron-sulfur cluster assembly protein SufA (172 aa).

Positions 1–19 are cleaved as a signal peptide; sequence MFINIFLFLFAATINISSS. [4Fe-4S] cluster-binding residues include C96, C164, and C166.

It belongs to the HesB/IscA family. In terms of assembly, homodimer.

Its subcellular location is the plastid. The protein localises to the apicoplast. The protein operates within cofactor biosynthesis; iron-sulfur cluster biosynthesis. Functionally, participates in the sulfur mobilization (SUF) pathway for iron-sulfur (Fe-S) cluster biogenesis. Involved in the pre-assembly of [4Fe-4S] clusters and their transfer to target proteins. The chain is Iron-sulfur cluster assembly protein SufA from Plasmodium berghei (strain Anka).